Reading from the N-terminus, the 487-residue chain is Acetyl-coenzyme A carboxylase carboxyl transferase subunit beta, chloroplastic (487 aa).

Residues 223–487 form the CoA carboxyltransferase N-terminal domain; it reads LWIQCDNCYG…FCPLNKTEIK (265 aa). Residues Cys227, Cys230, Cys243, and Cys246 each contribute to the Zn(2+) site. The C4-type zinc finger occupies 227–246; that stretch reads CDNCYGLMYKKVKMNVCEQC.

This sequence belongs to the AccD/PCCB family. Acetyl-CoA carboxylase is a heterohexamer composed of biotin carboxyl carrier protein, biotin carboxylase and 2 subunits each of ACCase subunit alpha and ACCase plastid-coded subunit beta (accD). Zn(2+) is required as a cofactor.

It localises to the plastid. It is found in the chloroplast stroma. It catalyses the reaction N(6)-carboxybiotinyl-L-lysyl-[protein] + acetyl-CoA = N(6)-biotinyl-L-lysyl-[protein] + malonyl-CoA. It participates in lipid metabolism; malonyl-CoA biosynthesis; malonyl-CoA from acetyl-CoA: step 1/1. Functionally, component of the acetyl coenzyme A carboxylase (ACC) complex. Biotin carboxylase (BC) catalyzes the carboxylation of biotin on its carrier protein (BCCP) and then the CO(2) group is transferred by the transcarboxylase to acetyl-CoA to form malonyl-CoA. In Nasturtium officinale (Watercress), this protein is Acetyl-coenzyme A carboxylase carboxyl transferase subunit beta, chloroplastic.